Consider the following 448-residue polypeptide: Exodeoxyribonuclease 7 large subunit (448 aa).

It belongs to the XseA family. As to quaternary structure, heterooligomer composed of large and small subunits.

It localises to the cytoplasm. It catalyses the reaction Exonucleolytic cleavage in either 5'- to 3'- or 3'- to 5'-direction to yield nucleoside 5'-phosphates.. In terms of biological role, bidirectionally degrades single-stranded DNA into large acid-insoluble oligonucleotides, which are then degraded further into small acid-soluble oligonucleotides. The chain is Exodeoxyribonuclease 7 large subunit from Shewanella sp. (strain MR-4).